Reading from the N-terminus, the 550-residue chain is Tyrosine-protein phosphatase 1 (550 aa).

Residues 260–539 (LYQKFLRLQS…KYVYDLIDSL (280 aa)) enclose the Tyrosine-protein phosphatase domain. Phosphoserine is present on residues serine 318 and serine 320. The active-site Phosphocysteine intermediate is cysteine 470.

Belongs to the protein-tyrosine phosphatase family. Non-receptor class subfamily.

The protein localises to the cytoplasm. The catalysed reaction is O-phospho-L-tyrosyl-[protein] + H2O = L-tyrosyl-[protein] + phosphate. Functionally, plays a role in inhibiting the onset of mitosis. Dephosphorylates sty1/spc1 and wis1/spc2/sty2. The chain is Tyrosine-protein phosphatase 1 (pyp1) from Schizosaccharomyces pombe (strain 972 / ATCC 24843) (Fission yeast).